The chain runs to 384 residues: Chaperone protein DnaJ (384 aa).

Residues 4-68 (DFYEILGVSR…EKRQMYDQMG (65 aa)) enclose the J domain. Disordered stretches follow at residues 29-60 (REYH…DEEK) and 73-131 (EQAE…GQDL). A compositionally biased stretch (basic and acidic residues) spans 42–60 (EEKFKQAKKAKEVLTDEEK). The segment covering 80-101 (GAGGGGGRGGMGGDPFGGGAGG) has biased composition (gly residues). Residues 102–111 (FDMQDIFDQF) show a composition bias toward low complexity. Residues 112-121 (FGGGGRGGRG) are compositionally biased toward gly residues. The CR-type zinc finger occupies 145-227 (GATKQLNVTR…CRGNGVVQND (83 aa)). 4 residues coordinate Zn(2+): Cys158, Cys161, Cys175, and Cys178. CXXCXGXG motif repeat units follow at residues 158–165 (CDDCDGAG), 175–182 (CPECNGQG), 201–208 (CRRCDGEG), and 215–222 (CSTCRGNG). The disordered stretch occupies residues 160–191 (DCDGAGHPPGADSETCPECNGQGQTTQVQQTP). Low complexity predominate over residues 180–190 (GQGQTTQVQQT). Zn(2+) is bound by residues Cys201, Cys204, Cys215, and Cys218.

It belongs to the DnaJ family. In terms of assembly, homodimer. It depends on Zn(2+) as a cofactor.

Its subcellular location is the cytoplasm. In terms of biological role, participates actively in the response to hyperosmotic and heat shock by preventing the aggregation of stress-denatured proteins and by disaggregating proteins, also in an autonomous, DnaK-independent fashion. Unfolded proteins bind initially to DnaJ; upon interaction with the DnaJ-bound protein, DnaK hydrolyzes its bound ATP, resulting in the formation of a stable complex. GrpE releases ADP from DnaK; ATP binding to DnaK triggers the release of the substrate protein, thus completing the reaction cycle. Several rounds of ATP-dependent interactions between DnaJ, DnaK and GrpE are required for fully efficient folding. Also involved, together with DnaK and GrpE, in the DNA replication of plasmids through activation of initiation proteins. This chain is Chaperone protein DnaJ, found in Haloarcula marismortui (strain ATCC 43049 / DSM 3752 / JCM 8966 / VKM B-1809) (Halobacterium marismortui).